The sequence spans 418 residues: Zinc metalloproteinase-disintegrin-like batroxstatin-2 (418 aa).

The 197-residue stretch at 10 to 206 (KYVKLVLVAD…DMPQCILEKP (197 aa)) folds into the Peptidase M12B domain. 3 cysteine pairs are disulfide-bonded: cysteine 121–cysteine 201, cysteine 161–cysteine 185, and cysteine 163–cysteine 168. Histidine 146 is a binding site for Zn(2+). Residue glutamate 147 is part of the active site. Residues histidine 150 and histidine 156 each contribute to the Zn(2+) site. Positions 214 to 299 (PPVCGNYFVE…AECTDRFQRN (86 aa)) constitute a Disintegrin domain. Positions 216, 219, 221, 223, 226, and 229 each coordinate Ca(2+). 14 cysteine pairs are disulfide-bonded: cysteine 217–cysteine 246, cysteine 228–cysteine 241, cysteine 230–cysteine 236, cysteine 240–cysteine 263, cysteine 254–cysteine 260, cysteine 259–cysteine 285, cysteine 272–cysteine 292, cysteine 279–cysteine 310, cysteine 303–cysteine 315, cysteine 322–cysteine 372, cysteine 337–cysteine 383, cysteine 350–cysteine 360, cysteine 367–cysteine 409, and cysteine 403–cysteine 414. Positions 278 to 280 (ECD) match the D/ECD-tripeptide motif. Aspartate 280, methionine 281, aspartate 283, aspartate 294, and arginine 295 together coordinate Ca(2+). Residue asparagine 312 is glycosylated (N-linked (GlcNAc...) asparagine).

It belongs to the venom metalloproteinase (M12B) family. P-III subfamily. P-IIIc sub-subfamily. In terms of assembly, homodimer; disulfide-linked. It depends on Zn(2+) as a cofactor. As to expression, expressed by the venom gland.

It is found in the secreted. In terms of biological role, snake venom zinc metalloprotease that induces apoptosis in vascular endothelial cells (VEC), without degrading the extracellular matrix (it cannot cleave collagen) or inhibiting adhesion of VEC. Has also fibrinogenolytic and hemorrhagic activities. This is Zinc metalloproteinase-disintegrin-like batroxstatin-2 from Bothrops atrox (Barba amarilla).